The primary structure comprises 173 residues: HAM34 protein (173 aa).

Low complexity predominate over residues 22–89; that stretch reads AAPATTPDTA…ADGTQTATAP (68 aa). The tract at residues 22–155 is disordered; sequence AAPATTPDTA…ATDTTSGASH (134 aa). The span at 95–133 shows a compositional bias: polar residues; it reads TEESSASGEMTPTVGTDTSDQVSDSTAAGPSTPEGSMTG. The span at 134–155 shows a compositional bias: low complexity; it reads TSTPKASDSSSSATDTTSGASH.

In terms of tissue distribution, germinating spores.

In terms of biological role, could be a structural protein required for the infection process of B.lactucae. This is HAM34 protein (HAM34) from Bremia lactucae (Lettuce downy mildew).